A 93-amino-acid polypeptide reads, in one-letter code: Sm-like protein LSM2 (93 aa).

In terms of domain architecture, Sm spans 2–76; that stretch reads LFFSYFKDLV…VRYVQLPKDG (75 aa).

Belongs to the snRNP Sm proteins family. Component of the heptameric LSM1-LSM7 complex that forms a seven-membered ring structure with a donut shape. The LSM subunits are arranged in the order LSM1, LSM2, LSM3, LSM6, LSM5, LSM7 and LSM4. LSM2 subunit interacts only with its two neighboring subunits, LSM1A or LSM1B and LSM3A or LSM3B. Component of the heptameric LSM2-LSM8 complex that forms a seven-membered ring structure with a donut shape. The LSM subunits are arranged in the order LSM8, LSM2, LSM3, LSM6, LSM5, LSM7 and LSM4. LSM2 subunit interacts only with its two neighboring subunits, LSM8 and LSM3A or LSM3B. Expressed in roots, leaves, stems, flowers and siliques.

The protein localises to the cytoplasm. It localises to the nucleus. Component of LSM protein complexes, which are involved in RNA processing. Component of the cytoplasmic LSM1-LSM7 complex which is involved in mRNA degradation by promoting decapping and leading to accurate 5'-3' mRNA decay. The cytoplasmic LSM1-LSM7 complex regulates developmental gene expression by the decapping of specific development-related transcripts. Component of the nuclear LSM2-LSM8 complex which is involved splicing nuclear mRNAs. LSM2-LSM8 binds directly to the U6 small nuclear RNAs (snRNAs) and is essential for accurate splicing of selected development-related mRNAs through the stabilization of the spliceosomal U6 snRNA. Plays a critical role in the regulation of development-related gene expression. This Arabidopsis thaliana (Mouse-ear cress) protein is Sm-like protein LSM2.